Consider the following 84-residue polypeptide: Venom protein SynTx (84 aa).

Residues T1 to T19 form the signal peptide. Cystine bridges form between C22–C43, C36–C61, C65–C76, and C77–C82.

The protein belongs to the three-finger toxin family. Short-chain subfamily. Aminergic toxin sub-subfamily. As to quaternary structure, homodimer; disulfide-linked. Expressed by the venom gland.

It localises to the secreted. This protein shows a synergetic toxic effect in that it enhances the toxicity of other toxins. In Dendroaspis jamesoni jamesoni (Jameson's mamba), this protein is Venom protein SynTx.